A 216-amino-acid polypeptide reads, in one-letter code: Orotate phosphoribosyltransferase (216 aa).

Lys30 lines the 5-phospho-alpha-D-ribose 1-diphosphate pocket. 38–39 (FF) provides a ligand contact to orotate. 5-phospho-alpha-D-ribose 1-diphosphate contacts are provided by residues 75–76 (YK), Arg102, Lys103, Lys106, His108, and 128–136 (DDVITAGTA). 2 residues coordinate orotate: Thr132 and Arg160.

The protein belongs to the purine/pyrimidine phosphoribosyltransferase family. PyrE subfamily. Homodimer. It depends on Mg(2+) as a cofactor.

It catalyses the reaction orotidine 5'-phosphate + diphosphate = orotate + 5-phospho-alpha-D-ribose 1-diphosphate. Its pathway is pyrimidine metabolism; UMP biosynthesis via de novo pathway; UMP from orotate: step 1/2. In terms of biological role, catalyzes the transfer of a ribosyl phosphate group from 5-phosphoribose 1-diphosphate to orotate, leading to the formation of orotidine monophosphate (OMP). The sequence is that of Orotate phosphoribosyltransferase from Acinetobacter baumannii (strain ACICU).